Reading from the N-terminus, the 440-residue chain is Ribulose bisphosphate carboxylase large chain (440 aa).

Lys-4 bears the N6,N6,N6-trimethyllysine mark. Substrate-binding residues include Asn-113 and Thr-163. The active-site Proton acceptor is Lys-165. Lys-167 contributes to the substrate binding site. Residues Lys-191, Asp-193, and Glu-194 each contribute to the Mg(2+) site. Residue Lys-191 is modified to N6-carboxylysine. His-284 (proton acceptor) is an active-site residue. Residues Arg-285, His-317, and Ser-369 each contribute to the substrate site.

It belongs to the RuBisCO large chain family. Type I subfamily. In terms of assembly, heterohexadecamer of 8 large chains and 8 small chains; disulfide-linked. The disulfide link is formed within the large subunit homodimers. The cofactor is Mg(2+). The disulfide bond which can form in the large chain dimeric partners within the hexadecamer appears to be associated with oxidative stress and protein turnover.

The protein localises to the plastid. It localises to the chloroplast. It carries out the reaction 2 (2R)-3-phosphoglycerate + 2 H(+) = D-ribulose 1,5-bisphosphate + CO2 + H2O. The enzyme catalyses D-ribulose 1,5-bisphosphate + O2 = 2-phosphoglycolate + (2R)-3-phosphoglycerate + 2 H(+). Functionally, ruBisCO catalyzes two reactions: the carboxylation of D-ribulose 1,5-bisphosphate, the primary event in carbon dioxide fixation, as well as the oxidative fragmentation of the pentose substrate in the photorespiration process. Both reactions occur simultaneously and in competition at the same active site. The protein is Ribulose bisphosphate carboxylase large chain of Polystichum munitum (Western sword-fern).